Reading from the N-terminus, the 1441-residue chain is Envelopment polyprotein (1441 aa).

The N-terminal stretch at 1–13 (MIRMLVLIVVTAA) is a signal peptide. The Lumenal portion of the chain corresponds to 14–200 (SPVYQRCFQD…GSIANSICQN (187 aa)). Asparagine 57 carries N-linked (GlcNAc...) asparagine; by host glycosylation. A helical transmembrane segment spans residues 201 to 221 (IEIIILVTLTLLIFILLSILS). Over 222–305 (KTYICYLLMP…RAARVMCKSK (84 aa)) the chain is Cytoplasmic. A helical transmembrane segment spans residues 306–326 (GPASILSIITAVLVLTFVTPI). Over 327-365 (NSMVLGESKETFELEELPDDMLEMALRINSYYFTCILNY) the chain is Lumenal. A helical transmembrane segment spans residues 366-386 (AVSWGLIIAGLLVGLIFKKYQ). The Cytoplasmic portion of the chain corresponds to 387 to 452 (HRFLNIYAMY…LVQYKAKWMM (66 aa)). The chain crosses the membrane as a helical span at residues 453–473 (NFLIIYIFLILIKDSAIVGQA). The Lumenal portion of the chain corresponds to 474–1395 (TGTDFTTCLE…EPFKNLFGSY (922 aa)). 2 N-linked (GlcNAc...) asparagine; by host glycosylation sites follow: asparagine 490 and asparagine 1177. The chain crosses the membrane as a helical span at residues 1396–1416 (IGIFYTFIISIIALLVIIYVL). Over 1417–1441 (LPICFKLRDTLRKHDDAYKREMKIR) the chain is Cytoplasmic.

This sequence belongs to the orthobunyavirus envelope glycoprotein family. Glycoprotein C and Glycoprotein N interact with each other. Specific enzymatic cleavages in vivo yield mature proteins including nonstructural protein NSm, glycoprotein C, and glycoprotein N.

The protein localises to the virion membrane. The protein resides in the host Golgi apparatus membrane. It localises to the host endoplasmic reticulum membrane. In terms of biological role, glycoprotein C and Glycoprotein N interact with each other and are present at the surface of the virion. They are able to attach the virion to a cell receptor and to promote fusion of membranes after endocytosis of the virion. This Bunyavirus La Crosse protein is Envelopment polyprotein (GP).